Reading from the N-terminus, the 104-residue chain is uncharacterized protein (104 aa).

This is an uncharacterized protein from Pasteurella multocida (strain Pm70).